The chain runs to 314 residues: tRNA dimethylallyltransferase (314 aa).

Residue 11 to 18 participates in ATP binding; sequence GPTGSGKT. 13-18 provides a ligand contact to substrate; that stretch reads TGSGKT. The segment at 36–39 is interaction with substrate tRNA; it reads DSMQ.

This sequence belongs to the IPP transferase family. As to quaternary structure, monomer. Mg(2+) serves as cofactor.

It catalyses the reaction adenosine(37) in tRNA + dimethylallyl diphosphate = N(6)-dimethylallyladenosine(37) in tRNA + diphosphate. Functionally, catalyzes the transfer of a dimethylallyl group onto the adenine at position 37 in tRNAs that read codons beginning with uridine, leading to the formation of N6-(dimethylallyl)adenosine (i(6)A). In Chlamydia trachomatis serovar D (strain ATCC VR-885 / DSM 19411 / UW-3/Cx), this protein is tRNA dimethylallyltransferase.